We begin with the raw amino-acid sequence, 98 residues long: mRNA interferase toxin MqsR (98 aa).

Might be a dimer. Also reported to be a monomer. Crystallizes as a heterotetramer with MqsA, MqsR-MqsA(2)-MqsR. Purifies as a possible heterohexamer of 2 MqsR dimers and 1 MqsA dimer. When the 2 dissociate the MsqR mRNA interferase becomes active.

In terms of biological role, toxic component of a type II toxin-antitoxin (TA) system. Plays a significant role in the control of biofilm formation and induction of persister cells in the presence of antibiotics. An mRNA interferase which has been reported to be translation-independent. It has also been reported to be translation-dependent. Cleavage has been reported to occur on either side of G in the sequence GCU. Also reported to cleave after C in GC(A/U) sequences. There are only 14 genes in E.coli W3110 (and probably also MG1655) that do not have a GCU sequence and thus are resistant to the mRNA interferase activity; among these is the gene for toxin GhoT. Overexpression of MqsR causes cessation of cell growth and inhibits cell proliferation via inhibition of translation as well as increasing persister cell formation; these effects are overcome by concomitant or subsequent expression of antitoxin MqsA. Cross-talk can occur between different TA systems. Ectopic expression of this toxin induces transcription of the relBEF TA system operon with specific cleavage of the relBEF mRNA produced. Regulates the expression of GhoT/GhoS, a type V TA system. Persistence depends on toxin GhoT activity, which MqsR controls at the post-transcriptional level by selectively degrading the antitoxin ghoS segment of the ghoST mRNA. Overexpression leads to a dramatic increase in tolerance to the antibiotic ofloxacin. This TA system mediates cell growth during bile acid deoxycholate stress by degrading mRNA for probable deoxycholate-binding protein YgiS; bile acid detergents such as deoxycholate are important for host defense against bacterial growth in the gall bladder and duodenum. Its function is as follows. Initially reported to act as a cotranscription factor with MqsA. Following further experiments, the MqsR-MqsA complex does not bind DNA and all reported data are actually due to a small fraction of free MqsA alone binding DNA. Addition of MqsR to a preformed MqsA-promoter DNA complex causes dissociation of the MqsA-DNA complex, probably causing derepression of MqsA-repressed transcripts. Does not bind DNA in the presence or absence of MqsA. The chain is mRNA interferase toxin MqsR from Escherichia coli (strain K12).